The primary structure comprises 150 residues: SsrA-binding protein (150 aa).

The protein belongs to the SmpB family.

It localises to the cytoplasm. Its function is as follows. Required for rescue of stalled ribosomes mediated by trans-translation. Binds to transfer-messenger RNA (tmRNA), required for stable association of tmRNA with ribosomes. tmRNA and SmpB together mimic tRNA shape, replacing the anticodon stem-loop with SmpB. tmRNA is encoded by the ssrA gene; the 2 termini fold to resemble tRNA(Ala) and it encodes a 'tag peptide', a short internal open reading frame. During trans-translation Ala-aminoacylated tmRNA acts like a tRNA, entering the A-site of stalled ribosomes, displacing the stalled mRNA. The ribosome then switches to translate the ORF on the tmRNA; the nascent peptide is terminated with the 'tag peptide' encoded by the tmRNA and targeted for degradation. The ribosome is freed to recommence translation, which seems to be the essential function of trans-translation. In Campylobacter jejuni subsp. jejuni serotype O:6 (strain 81116 / NCTC 11828), this protein is SsrA-binding protein.